Reading from the N-terminus, the 74-residue chain is Exodeoxyribonuclease 7 small subunit (74 aa).

Belongs to the XseB family. Heterooligomer composed of large and small subunits.

The protein resides in the cytoplasm. It carries out the reaction Exonucleolytic cleavage in either 5'- to 3'- or 3'- to 5'-direction to yield nucleoside 5'-phosphates.. Bidirectionally degrades single-stranded DNA into large acid-insoluble oligonucleotides, which are then degraded further into small acid-soluble oligonucleotides. The protein is Exodeoxyribonuclease 7 small subunit of Clostridium botulinum (strain Eklund 17B / Type B).